Here is a 255-residue protein sequence, read N- to C-terminus: 3-deoxy-manno-octulosonate cytidylyltransferase (255 aa).

It belongs to the KdsB family.

Its subcellular location is the cytoplasm. The enzyme catalyses 3-deoxy-alpha-D-manno-oct-2-ulosonate + CTP = CMP-3-deoxy-beta-D-manno-octulosonate + diphosphate. It functions in the pathway nucleotide-sugar biosynthesis; CMP-3-deoxy-D-manno-octulosonate biosynthesis; CMP-3-deoxy-D-manno-octulosonate from 3-deoxy-D-manno-octulosonate and CTP: step 1/1. The protein operates within bacterial outer membrane biogenesis; lipopolysaccharide biosynthesis. Functionally, activates KDO (a required 8-carbon sugar) for incorporation into bacterial lipopolysaccharide in Gram-negative bacteria. The protein is 3-deoxy-manno-octulosonate cytidylyltransferase of Xanthobacter autotrophicus (strain ATCC BAA-1158 / Py2).